The following is a 195-amino-acid chain: Putative CheY-P phosphatase CheC1 (195 aa).

The protein belongs to the CheC family.

Catalyzes the dephosphorylation of CheY-P. This is Putative CheY-P phosphatase CheC1 (cheC1) from Halobacterium salinarum (strain ATCC 29341 / DSM 671 / R1).